The sequence spans 255 residues: MTSANDTVNKQAVASAFSRAAGSYDAAAALQRDVGERLLGMGSSHPGEQLLDAGCGTGYFSRMWRERGKRVTALDLAPGMLDVARQRQAAHHYLLGDIEQVPLPDAAMDICFSSLVVQWCSDLPAALAELYRVTRPGGVILFSTLAAGSLQELGDAWQQVDGERHVNAFLPLTQIRTACAAYRHELVTELRTLNYPDVMTLMRSLKGIGATHLHQGREGGLMSRGRLAALQAAYPCRQGQFPLSYHLAYGVIYRE.

Belongs to the methyltransferase superfamily.

The catalysed reaction is malonyl-[ACP] + S-adenosyl-L-methionine = malonyl-[ACP] methyl ester + S-adenosyl-L-homocysteine. It participates in cofactor biosynthesis; biotin biosynthesis. Functionally, converts the free carboxyl group of a malonyl-thioester to its methyl ester by transfer of a methyl group from S-adenosyl-L-methionine (SAM). It allows to synthesize pimeloyl-ACP via the fatty acid synthetic pathway. This is Malonyl-[acyl-carrier protein] O-methyltransferase from Serratia marcescens.